Here is a 217-residue protein sequence, read N- to C-terminus: Probable GTP-binding protein EngB (217 aa).

In terms of domain architecture, EngB-type G spans 27-201 (EGIEVAFAGR…REKLDTWFSE (175 aa)). GTP-binding positions include 35 to 42 (GRSNAGKS), 62 to 66 (GRTQL), 80 to 83 (DLPG), 147 to 150 (TKAD), and 180 to 182 (FSS). Residues serine 42 and threonine 64 each coordinate Mg(2+).

This sequence belongs to the TRAFAC class TrmE-Era-EngA-EngB-Septin-like GTPase superfamily. EngB GTPase family. Mg(2+) is required as a cofactor.

Its function is as follows. Necessary for normal cell division and for the maintenance of normal septation. This chain is Probable GTP-binding protein EngB, found in Yersinia enterocolitica serotype O:8 / biotype 1B (strain NCTC 13174 / 8081).